Consider the following 213-residue polypeptide: Gas vesicle protein F (213 aa).

The protein belongs to the gas vesicle GvpF/GvpL family. As to quaternary structure, binds GvpA.

It is found in the gas vesicle. Functionally, a minor component of the gas vesicle, may be involved in preventing GvpA aggregation during gas vesicle nucleation. Gas vesicles are hollow, gas filled proteinaceous nanostructures found in some microorganisms. They allow positioning of halobacteria at the optimal depth for growth in the poorly aerated, shallow brine pools of their habitat. In terms of biological role, expression of a 9.5 kb mc-vac DNA fragment containing 2 divergently transcribed regions (gvpD-gvpE-gvpF-gvpG-gvpH-gvpI-gvpJ-gvpK-gvpL-gvpM and gvpA-gvpC-gvpN-gvpO) allows H.volcanii to produce gas vesicles. This Haloferax mediterranei (strain ATCC 33500 / DSM 1411 / JCM 8866 / NBRC 14739 / NCIMB 2177 / R-4) (Halobacterium mediterranei) protein is Gas vesicle protein F.